We begin with the raw amino-acid sequence, 78 residues long: Acyl carrier protein (78 aa).

Residues 2-77 (SDIAERVKKI…DAVKFIEKAQ (76 aa)) enclose the Carrier domain. O-(pantetheine 4'-phosphoryl)serine is present on Ser-37.

Belongs to the acyl carrier protein (ACP) family. 4'-phosphopantetheine is transferred from CoA to a specific serine of apo-ACP by AcpS. This modification is essential for activity because fatty acids are bound in thioester linkage to the sulfhydryl of the prosthetic group.

It is found in the cytoplasm. It participates in lipid metabolism; fatty acid biosynthesis. Its function is as follows. Carrier of the growing fatty acid chain in fatty acid biosynthesis. This Rhizobium etli (strain CIAT 652) protein is Acyl carrier protein.